Consider the following 339-residue polypeptide: Ketol-acid reductoisomerase (NADP(+)) (339 aa).

The KARI N-terminal Rossmann domain occupies 1 to 182 (MRVYYDRDAD…GGGRSGIIET (182 aa)). NADP(+)-binding positions include 24-27 (YGSQ), lysine 48, serine 51, threonine 53, and 83-86 (DELQ). Histidine 108 is a catalytic residue. Glycine 134 lines the NADP(+) pocket. The KARI C-terminal knotted domain maps to 183-328 (TFQEECETDL…AKLRGMMPWI (146 aa)). Mg(2+) is bound by residues aspartate 191, glutamate 195, glutamate 227, and glutamate 231. Serine 252 lines the substrate pocket.

The protein belongs to the ketol-acid reductoisomerase family. Mg(2+) serves as cofactor.

It catalyses the reaction (2R)-2,3-dihydroxy-3-methylbutanoate + NADP(+) = (2S)-2-acetolactate + NADPH + H(+). The catalysed reaction is (2R,3R)-2,3-dihydroxy-3-methylpentanoate + NADP(+) = (S)-2-ethyl-2-hydroxy-3-oxobutanoate + NADPH + H(+). It participates in amino-acid biosynthesis; L-isoleucine biosynthesis; L-isoleucine from 2-oxobutanoate: step 2/4. It functions in the pathway amino-acid biosynthesis; L-valine biosynthesis; L-valine from pyruvate: step 2/4. Its function is as follows. Involved in the biosynthesis of branched-chain amino acids (BCAA). Catalyzes an alkyl-migration followed by a ketol-acid reduction of (S)-2-acetolactate (S2AL) to yield (R)-2,3-dihydroxy-isovalerate. In the isomerase reaction, S2AL is rearranged via a Mg-dependent methyl migration to produce 3-hydroxy-3-methyl-2-ketobutyrate (HMKB). In the reductase reaction, this 2-ketoacid undergoes a metal-dependent reduction by NADPH to yield (R)-2,3-dihydroxy-isovalerate. The protein is Ketol-acid reductoisomerase (NADP(+)) of Allorhizobium ampelinum (strain ATCC BAA-846 / DSM 112012 / S4) (Agrobacterium vitis (strain S4)).